We begin with the raw amino-acid sequence, 233 residues long: Small ribosomal subunit protein eS4 (233 aa).

Residues 37-99 (VPLVVVLRDV…RDEYYRVFPD (63 aa)) enclose the S4 RNA-binding domain.

Belongs to the eukaryotic ribosomal protein eS4 family.

The chain is Small ribosomal subunit protein eS4 from Halobacterium salinarum (strain ATCC 29341 / DSM 671 / R1).